A 357-amino-acid chain; its full sequence is Cytochrome c peroxidase, mitochondrial (357 aa).

The transit peptide at 1-23 (MSATALRIAPIASRTFQRRLGYL) directs the protein to the mitochondrion. The active-site Proton acceptor is the His116. Residues 189–212 (PWRSGRTDLPEDMTPDNGRLPDGD) form a disordered region. His239 lines the heme b pocket. Trp255 (tryptophan radical intermediate) is an active-site residue.

This sequence belongs to the peroxidase family. Cytochrome c peroxidase subfamily. As to quaternary structure, forms a one-to-one complex with cytochrome c. Requires heme b as cofactor.

It localises to the mitochondrion matrix. Its subcellular location is the mitochondrion intermembrane space. It carries out the reaction 2 Fe(II)-[cytochrome c] + H2O2 + 2 H(+) = 2 Fe(III)-[cytochrome c] + 2 H2O. Its function is as follows. Destroys radicals which are normally produced within the cells and which are toxic to biological systems. In Candida glabrata (strain ATCC 2001 / BCRC 20586 / JCM 3761 / NBRC 0622 / NRRL Y-65 / CBS 138) (Yeast), this protein is Cytochrome c peroxidase, mitochondrial.